The following is a 295-amino-acid chain: Acetaldehyde dehydrogenase (295 aa).

11 to 14 provides a ligand contact to NAD(+); the sequence is SGNI. The active-site Acyl-thioester intermediate is the Cys127. Residues 158–166 and Asn269 each bind NAD(+); that span reads SAGPGTRSN.

The protein belongs to the acetaldehyde dehydrogenase family.

The catalysed reaction is acetaldehyde + NAD(+) + CoA = acetyl-CoA + NADH + H(+). This chain is Acetaldehyde dehydrogenase, found in Brevibacillus brevis (strain 47 / JCM 6285 / NBRC 100599).